Here is a 302-residue protein sequence, read N- to C-terminus: GATA transcription factor 28 (302 aa).

The segment at 47-66 (NAGGMSEGVETDIPSHPGNV) is disordered. The Tify domain occupies 77–112 (GSEQGDQLTLSFQGQVYVFDSVLPEKVQAVLLLLGG). The segment at 119-141 (APPGLGSPHQNNRVSSLPGTPQR) is disordered. A compositionally biased stretch (polar residues) spans 126-141 (PHQNNRVSSLPGTPQR). The CCT domain occupies 147–189 (RLASLVRFREKRKGRNFDKKIRYTVRKEVALRMQRNKGQFTSA). The GATA-type zinc-finger motif lies at 217-273 (QHQEISCRHCGIGEKSTPMMRRGPAGPRTLCNACGLMWANKGAFRDLSKASPQTAQN).

Belongs to the type IV zinc-finger family. Class C subfamily. Predominantly expressed in shoot apices, inflorescences and roots.

Its subcellular location is the nucleus. In terms of biological role, transcriptional activator that specifically binds 5'-GATA-3' or 5'-GAT-3' motifs within gene promoters. This chain is GATA transcription factor 28 (GATA28), found in Arabidopsis thaliana (Mouse-ear cress).